We begin with the raw amino-acid sequence, 331 residues long: MTIIVTGAAGFIGSNIVKGLNERGETNIIAVDNLTRAEKFNNLVDCEIADYLDKTDFVARFARGDFGNVRAVFHEGACSDTMETDGRYMMENNYRYTLALLEACLEQGAQFLYASSAATYGASTMFREDRDYEKPLNVYGYSKFLFDQVVRRRLPSAHSQIVGFRYFNVYGPREFHKGRMASVAFHHFNQFRAEGTVKLFGEYNGYAPGTQSRDFVSVEDVVKVNLYFLDHPEKSGIFNLGTGRSQPFNDIAVSVVNALRESEGKPALSLDEMVQEGLVEYVKFPDALRGKYQCFTQSDVSRLRGAGYSDQFLTVQEGVSRYCKWLLERSA.

Residues 11–12, 32–33, K39, K54, 75–79, and N92 contribute to the NADP(+) site; these read FI, DN, and EGACS. Residue Y139 is the Proton acceptor of the active site. K143 serves as a coordination point for NADP(+). Position 168 (N168) interacts with substrate. Residues V169 and K177 each coordinate NADP(+). K177 functions as the Proton acceptor in the catalytic mechanism. Residues R179, H186, 200–203, R213, and Y292 each bind substrate; that span reads FGEY.

Belongs to the NAD(P)-dependent epimerase/dehydratase family. HldD subfamily. In terms of assembly, homopentamer. It depends on NADP(+) as a cofactor.

The catalysed reaction is ADP-D-glycero-beta-D-manno-heptose = ADP-L-glycero-beta-D-manno-heptose. It functions in the pathway nucleotide-sugar biosynthesis; ADP-L-glycero-beta-D-manno-heptose biosynthesis; ADP-L-glycero-beta-D-manno-heptose from D-glycero-beta-D-manno-heptose 7-phosphate: step 4/4. In terms of biological role, catalyzes the interconversion between ADP-D-glycero-beta-D-manno-heptose and ADP-L-glycero-beta-D-manno-heptose via an epimerization at carbon 6 of the heptose. This Cupriavidus metallidurans (strain ATCC 43123 / DSM 2839 / NBRC 102507 / CH34) (Ralstonia metallidurans) protein is ADP-L-glycero-D-manno-heptose-6-epimerase.